A 154-amino-acid polypeptide reads, in one-letter code: MNPSLSVFTHWNDESNQSEIFSDPVISNCEKILRFLAPEFLHSLELSIYLVNDSLMAEINEERRGKPATTDVLSFPLYSEHPPIPVQILGEVVISMETCKKQAMEIGHGLVDEFYRLLVHGILHNFGYDHETNEEDALLMRKMEDECLDLVFAT.

Positions 120, 124, and 130 each coordinate Zn(2+).

The protein belongs to the endoribonuclease YbeY family. Zn(2+) serves as cofactor.

It localises to the cytoplasm. Single strand-specific metallo-endoribonuclease involved in late-stage 70S ribosome quality control and in maturation of the 3' terminus of the 16S rRNA. The sequence is that of Endoribonuclease YbeY from Leptospira biflexa serovar Patoc (strain Patoc 1 / Ames).